The primary structure comprises 294 residues: MDAKKPSWLRVNVPGGERYQKVRETLKGLQLHTVCAEAHCPNVAECWGGGTATVMLMGDVCTRGCRFCNVKTAAHPPALDPDEPRHLAAAIAELGLDYIVVTSVDRDDLPDGGAAHFADAIRRLKEIPGLLVEVLTPDFRGDPAAVRTVGRAAPDVFANNLETVRRLTPAVRDAKATYDQTLGVLAQMKREFPQVVTKSSIMVGLGEQEAEVVEAMRDLRANGVEILTLGQYLRPSAWHLPVVEYVSPERFAAYRDQGLALGFRYVASGPLVRSSYRAAELFLRGEIESRTKPR.

C35, C40, C46, C61, C65, C68, and S275 together coordinate [4Fe-4S] cluster. The region spanning 46 to 264 (CWGGGTATVM…RDQGLALGFR (219 aa)) is the Radical SAM core domain.

It belongs to the radical SAM superfamily. Lipoyl synthase family. [4Fe-4S] cluster serves as cofactor.

It is found in the cytoplasm. The catalysed reaction is [[Fe-S] cluster scaffold protein carrying a second [4Fe-4S](2+) cluster] + N(6)-octanoyl-L-lysyl-[protein] + 2 oxidized [2Fe-2S]-[ferredoxin] + 2 S-adenosyl-L-methionine + 4 H(+) = [[Fe-S] cluster scaffold protein] + N(6)-[(R)-dihydrolipoyl]-L-lysyl-[protein] + 4 Fe(3+) + 2 hydrogen sulfide + 2 5'-deoxyadenosine + 2 L-methionine + 2 reduced [2Fe-2S]-[ferredoxin]. It participates in protein modification; protein lipoylation via endogenous pathway; protein N(6)-(lipoyl)lysine from octanoyl-[acyl-carrier-protein]: step 2/2. Catalyzes the radical-mediated insertion of two sulfur atoms into the C-6 and C-8 positions of the octanoyl moiety bound to the lipoyl domains of lipoate-dependent enzymes, thereby converting the octanoylated domains into lipoylated derivatives. This Anaeromyxobacter dehalogenans (strain 2CP-C) protein is Lipoyl synthase.